Here is a 171-residue protein sequence, read N- to C-terminus: Small ribosomal subunit protein uS13 (171 aa).

2 disordered regions span residues Met1–Lys22 and Arg142–Glu171. Over residues Lys10 to Lys22 the composition is skewed to basic and acidic residues. Basic residues predominate over residues Arg142–Gly158.

It belongs to the universal ribosomal protein uS13 family. As to quaternary structure, part of the 30S ribosomal subunit. Forms a loose heterodimer with protein S19. Forms two bridges to the 50S subunit in the 70S ribosome.

Its function is as follows. Located at the top of the head of the 30S subunit, it contacts several helices of the 16S rRNA. In the 70S ribosome it contacts the 23S rRNA (bridge B1a) and protein L5 of the 50S subunit (bridge B1b), connecting the 2 subunits; these bridges are implicated in subunit movement. The polypeptide is Small ribosomal subunit protein uS13 (Thermoplasma volcanium (strain ATCC 51530 / DSM 4299 / JCM 9571 / NBRC 15438 / GSS1)).